A 485-amino-acid polypeptide reads, in one-letter code: Protein disulfide-isomerase 1 (485 aa).

The first 20 residues, 1-20 (MSLSVSFIFLLVASIGAVVA), serve as a signal peptide directing secretion. Thioredoxin domains lie at 21-130 (DSEN…KKSG) and 342-470 (YLEG…KYAG). 2 disulfide bridges follow: cysteine 52-cysteine 55 and cysteine 393-cysteine 396. Catalysis depends on nucleophile residues cysteine 393 and cysteine 396. The short motif at 482 to 485 (HEEL) is the Prevents secretion from ER element.

It belongs to the protein disulfide isomerase family.

Its subcellular location is the endoplasmic reticulum lumen. It carries out the reaction Catalyzes the rearrangement of -S-S- bonds in proteins.. The protein is Protein disulfide-isomerase 1 (pdi-1) of Caenorhabditis elegans.